The chain runs to 132 residues: Gonadotropin subunit beta-1 (132 aa).

The first 17 residues, 1-17 (MMRGVTMVLLLPMLVWA), serve as a signal peptide directing secretion. Cystine bridges form between cysteine 25–cysteine 73, cysteine 39–cysteine 88, cysteine 50–cysteine 104, cysteine 54–cysteine 106, and cysteine 109–cysteine 116. Asparagine 29 and asparagine 46 each carry an N-linked (GlcNAc...) asparagine glycan.

Belongs to the glycoprotein hormones subunit beta family. In terms of assembly, heterodimer of an alpha and a beta chain.

The protein resides in the secreted. Functionally, involved in gametogenesis and steroidogenesis. The sequence is that of Gonadotropin subunit beta-1 (cgba) from Ictalurus punctatus (Channel catfish).